A 145-amino-acid chain; its full sequence is Basic phospholipase A2 KPA2 (145 aa).

The first 19 residues, 1–19 (MYPAHLLVLVAVCVSLLGA), serve as a signal peptide directing secretion. A propeptide spanning residues 20–27 (ANIPPQPL) is cleaved from the precursor. Disulfide bonds link cysteine 38-cysteine 97, cysteine 52-cysteine 144, cysteine 54-cysteine 70, cysteine 69-cysteine 125, cysteine 76-cysteine 118, cysteine 86-cysteine 111, and cysteine 104-cysteine 116. Ca(2+)-binding residues include tyrosine 53, glycine 55, and glycine 57. Histidine 73 is a catalytic residue. Aspartate 74 serves as a coordination point for Ca(2+). Aspartate 119 is a catalytic residue.

The protein belongs to the phospholipase A2 family. Group I subfamily. D49 sub-subfamily. Monomer. Requires Ca(2+) as cofactor. As to expression, expressed by the venom gland.

It is found in the secreted. The enzyme catalyses a 1,2-diacyl-sn-glycero-3-phosphocholine + H2O = a 1-acyl-sn-glycero-3-phosphocholine + a fatty acid + H(+). In terms of biological role, snake venom phospholipase A2 (PLA2) that shows anticoagulant and neurotoxic activities. PLA2 catalyzes the calcium-dependent hydrolysis of the 2-acyl groups in 3-sn-phosphoglycerides. The chain is Basic phospholipase A2 KPA2 from Bungarus caeruleus (Indian krait).